The primary structure comprises 301 residues: Probable aspartoacylase (301 aa).

His13 and Glu16 together coordinate Zn(2+). Substrate is bound by residues Arg54 and Asn61–Arg62. Residue His105 participates in Zn(2+) binding. Residues Glu163 and Tyr273 each coordinate substrate.

The protein belongs to the AspA/AstE family. Aspartoacylase subfamily. Zn(2+) is required as a cofactor.

The enzyme catalyses an N-acyl-L-aspartate + H2O = a carboxylate + L-aspartate. The chain is Probable aspartoacylase from Prochlorococcus marinus (strain MIT 9312).